A 437-amino-acid chain; its full sequence is tRNA(Ile2) 2-agmatinylcytidine synthetase TiaS (437 aa).

The protein belongs to the TiaS family.

It is found in the cytoplasm. The enzyme catalyses cytidine(34) in tRNA(Ile2) + agmatine + ATP + H2O = 2-agmatinylcytidine(34) in tRNA(Ile2) + AMP + 2 phosphate + 2 H(+). ATP-dependent agmatine transferase that catalyzes the formation of 2-agmatinylcytidine (agm2C) at the wobble position (C34) of tRNA(Ile2), converting the codon specificity from AUG to AUA. The sequence is that of tRNA(Ile2) 2-agmatinylcytidine synthetase TiaS from Thermoplasma volcanium (strain ATCC 51530 / DSM 4299 / JCM 9571 / NBRC 15438 / GSS1).